A 157-amino-acid polypeptide reads, in one-letter code: GDP-mannose mannosyl hydrolase (157 aa).

Substrate is bound by residues 2–3, Phe8, and Arg36; that span reads FL. The Nudix hydrolase domain maps to 3 to 153; that stretch reads LRQEDFAAVV…SRAYFSPDAP (151 aa). Mg(2+) contacts are provided by Gly49, Glu69, and Gln122. The Nudix box motif lies at 50 to 71; it reads GRVCKDETLEAAFARLTQAELG.

The protein belongs to the Nudix hydrolase family. In terms of assembly, homodimer. Requires Mg(2+) as cofactor.

It catalyses the reaction GDP-alpha-D-mannose + H2O = D-mannose + GDP + H(+). Its function is as follows. Hydrolyzes GDP-mannose. The sequence is that of GDP-mannose mannosyl hydrolase from Salmonella typhi.